Reading from the N-terminus, the 233-residue chain is Maternal B9.15 protein (233 aa).

The tract at residues 135–165 is disordered; sequence KATSDYHSGTSSDEEPTNKEPKTIPKVSNPN.

Belongs to the BTG family.

The protein is Maternal B9.15 protein of Xenopus laevis (African clawed frog).